The following is a 213-amino-acid chain: Ribonuclease HII (213 aa).

The region spanning 25–213 (KTLCGVDEAG…FKPVKQLLPH (189 aa)) is the RNase H type-2 domain. Positions 31, 32, and 124 each coordinate a divalent metal cation.

The protein belongs to the RNase HII family. It depends on Mn(2+) as a cofactor. Mg(2+) is required as a cofactor.

It localises to the cytoplasm. It catalyses the reaction Endonucleolytic cleavage to 5'-phosphomonoester.. Its function is as follows. Endonuclease that specifically degrades the RNA of RNA-DNA hybrids. In Magnetococcus marinus (strain ATCC BAA-1437 / JCM 17883 / MC-1), this protein is Ribonuclease HII.